Reading from the N-terminus, the 70-residue chain is Drosomycin (70 aa).

Residues 1-20 form the signal peptide; sequence MMQIKYLFALFAVLMLVVLG. Residues 21 to 26 constitute a propeptide that is removed on maturation; that stretch reads ANEADA. 4 disulfide bridges follow: C28-C70, C37-C59, C45-C65, and C49-C67. N42 is a glycosylation site (N-linked (GlcNAc...) asparagine).

Hemolymph (at protein level). Synthesized in the fat body and is secreted into the blood. In larvae, expressed in the visceral branches and posterior spiracles of the trachea.

The protein localises to the secreted. Functionally, possesses antifungal activity and is active against a relatively broad spectrum of filamentous fungi. It inhibits spore germination at high concentrations and at low concentrations delays growth of hyphae which subsequently exhibit abnormal morphology. Spz C-106 in the hemolymph controls expression of the antifungal peptide by acting as a ligand of Tl and inducing an intracellular signaling pathway. Part of a psh-dependent Toll pathway, which may function in activating the systematic immune response in response to localized melanization of the tracheal system. In Drosophila melanogaster (Fruit fly), this protein is Drosomycin (Drs).